A 93-amino-acid polypeptide reads, in one-letter code: uncharacterized protein (93 aa).

A disordered region spans residues 73–93 (KWTVSGPVKQDTGKTDPAEKN). A compositionally biased stretch (basic and acidic residues) spans 83-93 (DTGKTDPAEKN).

This is an uncharacterized protein from Rhodobacter capsulatus (Rhodopseudomonas capsulata).